The chain runs to 380 residues: Cytochrome b (380 aa).

Helical transmembrane passes span Phe-34–Met-54, Trp-78–Ile-99, Trp-114–Leu-134, and Phe-179–Thr-199. 2 residues coordinate heme b: His-84 and His-98. Residues His-183 and His-197 each contribute to the heme b site. A ubiquinone is bound at residue His-202. Helical transmembrane passes span Leu-227 to Ser-247, Leu-289 to His-309, Leu-321 to Ser-341, and Phe-348 to Pro-368.

The protein belongs to the cytochrome b family. The cytochrome bc1 complex contains 11 subunits: 3 respiratory subunits (MT-CYB, CYC1 and UQCRFS1), 2 core proteins (UQCRC1 and UQCRC2) and 6 low-molecular weight proteins (UQCRH/QCR6, UQCRB/QCR7, UQCRQ/QCR8, UQCR10/QCR9, UQCR11/QCR10 and a cleavage product of UQCRFS1). This cytochrome bc1 complex then forms a dimer. Requires heme b as cofactor.

The protein localises to the mitochondrion inner membrane. Component of the ubiquinol-cytochrome c reductase complex (complex III or cytochrome b-c1 complex) that is part of the mitochondrial respiratory chain. The b-c1 complex mediates electron transfer from ubiquinol to cytochrome c. Contributes to the generation of a proton gradient across the mitochondrial membrane that is then used for ATP synthesis. This Procellaria westlandica (Westland petrel) protein is Cytochrome b (MT-CYB).